Here is a 68-residue protein sequence, read N- to C-terminus: DNA-directed RNA polymerase subunit Rpo10 (68 aa).

Positions 7, 10, 44, and 45 each coordinate Zn(2+).

The protein belongs to the archaeal Rpo10/eukaryotic RPB10 RNA polymerase subunit family. In terms of assembly, part of the RNA polymerase complex. Zn(2+) serves as cofactor.

It is found in the cytoplasm. It carries out the reaction RNA(n) + a ribonucleoside 5'-triphosphate = RNA(n+1) + diphosphate. DNA-dependent RNA polymerase (RNAP) catalyzes the transcription of DNA into RNA using the four ribonucleoside triphosphates as substrates. In Methanococcus maripaludis (strain DSM 14266 / JCM 13030 / NBRC 101832 / S2 / LL), this protein is DNA-directed RNA polymerase subunit Rpo10.